The primary structure comprises 77 residues: Acyl carrier protein (77 aa).

A Carrier domain is found at 2–77 (AEVLEKVTKI…DAVKYIEANA (76 aa)). Serine 37 is subject to O-(pantetheine 4'-phosphoryl)serine.

Belongs to the acyl carrier protein (ACP) family. Post-translationally, 4'-phosphopantetheine is transferred from CoA to a specific serine of apo-ACP by AcpS. This modification is essential for activity because fatty acids are bound in thioester linkage to the sulfhydryl of the prosthetic group.

It localises to the cytoplasm. It participates in lipid metabolism; fatty acid biosynthesis. In terms of biological role, carrier of the growing fatty acid chain in fatty acid biosynthesis. In Listeria innocua serovar 6a (strain ATCC BAA-680 / CLIP 11262), this protein is Acyl carrier protein.